We begin with the raw amino-acid sequence, 432 residues long: Non-peptidase homolog YmxG (432 aa).

Positions 1–20 (MKKFLITLLLGVFMGLQASA) are cleaved as a signal peptide.

The protein belongs to the peptidase M16 family.

The protein resides in the secreted. Its function is as follows. May contribute to the full activity of the protease PqqE. The protein is Non-peptidase homolog YmxG of Helicobacter pylori (strain ATCC 700392 / 26695) (Campylobacter pylori).